The primary structure comprises 397 residues: N-acetyllactosaminide beta-1,3-N-acetylglucosaminyltransferase 2 (397 aa).

Over 1-7 the chain is Cytoplasmic; the sequence is MSVGRRR. A helical; Signal-anchor for type II membrane protein transmembrane segment spans residues 8-28; sequence VKLLGILMMANVFIYLIVEVS. The Lumenal segment spans residues 29-325; sequence KNSSQDKNGK…ALRLYSATSR (297 aa). N-linked (GlcNAc...) asparagine glycans are attached at residues Asn30, Asn79, Asn89, Asn127, Asn173, and Asn219.

The protein belongs to the glycosyltransferase 31 family. In terms of assembly, interacts with B3GNT8; this interaction greatly increases B3GNT2 catalytic activity, independently of B3GNT8 enzymatic activity. Requires Mn(2+) as cofactor. In terms of tissue distribution, expressed in heart, brain, lung, kidney and testis and, to a lesser extent, in liver and skeletal muscle. No expression in spleen.

Its subcellular location is the golgi apparatus membrane. It carries out the reaction a beta-D-galactosyl-(1-&gt;4)-N-acetyl-beta-D-glucosaminyl derivative + UDP-N-acetyl-alpha-D-glucosamine = an N-acetyl-beta-D-glucosaminyl-(1-&gt;3)-beta-D-galactosyl-(1-&gt;4)-N-acetyl-beta-D-glucosaminyl derivative + UDP + H(+). Its pathway is protein modification; protein glycosylation. Its function is as follows. Beta-1,3-N-acetylglucosaminyltransferase involved in the synthesis of poly-N-acetyllactosamine. Catalyzes the initiation and elongation of poly-N-acetyllactosamine chains. Probably constitutes the main polylactosamine synthase. The sequence is that of N-acetyllactosaminide beta-1,3-N-acetylglucosaminyltransferase 2 (B3GNT2) from Mus musculus (Mouse).